Reading from the N-terminus, the 94-residue chain is Lipolysis-activating peptide 1-beta chain (94 aa).

A signal peptide spans 1-19; it reads MKILAVVLISVIVLNTANG. Residues 20 to 87 enclose the LCN-type CS-alpha/beta domain; sequence ENYYPQKYTN…YFNALESQCP (68 aa). 3 cysteine pairs are disulfide-bonded: Cys-34/Cys-56, Cys-42/Cys-66, and Cys-46/Cys-68.

This sequence belongs to the long (3 C-C) scorpion toxin superfamily. Homodimer; disulfide-linked or monomer (edited version) or heterodimer of an alpha chain (AC P0CI44 or AC P0CI45) and this beta chain (non-edited version). As to expression, expressed by the venom gland.

It is found in the secreted. Functionally, the homodimer inhibits HMG-CoA reductase (HMGCR) (32% of inhibition produced by 0.6 uM), a glycoprotein involved in the control of cholesterol biosynthesis. The inhibitory effects of bumarsin are seen at much lower concentrations (0.6 uM) than that for statins such as atorvastatin (5 mM) and simvastatin (10 uM). In addition to inhibition of HMG-CoA reductase, this protein lowers cholesterol levels by inducing steroid hormone synthesis via StAR, and by increasing reverse cholesterol transport mediated by the induction of ABCA1 and APOA1. In terms of biological role, the heterodimer non-edited LVP1 induces lipolysis in rat adipocytes. Induction of lipolysis by LVP1 appears to be mediated through the beta-2 adrenergic receptor pathway (ADRB2). The monomer edited version, similar to alpha-toxins, may modulate voltage-gated sodium channels (Nav) and may block voltage-gated potassium channels (Kv). The sequence is that of Lipolysis-activating peptide 1-beta chain from Lychas mucronatus (Chinese swimming scorpion).